Reading from the N-terminus, the 264-residue chain is Octanoyltransferase (264 aa).

Residues 74–262 (GTASELVWLV…AFESVFGPRQ (189 aa)) enclose the BPL/LPL catalytic domain. Residues 113–120 (RGGEYTYH), 193–195 (AIG), and 206–208 (GIA) contribute to the substrate site. Cys-224 acts as the Acyl-thioester intermediate in catalysis.

It belongs to the LipB family.

It is found in the cytoplasm. The catalysed reaction is octanoyl-[ACP] + L-lysyl-[protein] = N(6)-octanoyl-L-lysyl-[protein] + holo-[ACP] + H(+). Its pathway is protein modification; protein lipoylation via endogenous pathway; protein N(6)-(lipoyl)lysine from octanoyl-[acyl-carrier-protein]: step 1/2. Functionally, catalyzes the transfer of endogenously produced octanoic acid from octanoyl-acyl-carrier-protein onto the lipoyl domains of lipoate-dependent enzymes. Lipoyl-ACP can also act as a substrate although octanoyl-ACP is likely to be the physiological substrate. This Brucella melitensis biotype 1 (strain ATCC 23456 / CCUG 17765 / NCTC 10094 / 16M) protein is Octanoyltransferase.